The sequence spans 849 residues: MAP7 domain-containing protein 1 (849 aa).

Disordered stretches follow at residues 1–151 (MESG…REER) and 186–210 (EQRL…EKNK). A compositionally biased stretch (pro residues) spans 24-41 (EPRPSPEGDPSPPPPPTP). Phosphothreonine occurs at positions 49 and 53. Phosphoserine is present on residues serine 72 and serine 95. At threonine 99 the chain carries Phosphothreonine. A phosphoserine mark is found at serine 115 and serine 118. Phosphothreonine is present on threonine 120. Serine 125 and serine 127 each carry phosphoserine. Positions 132 to 151 (QDVKKAGERHKLAKERREER) are enriched in basic and acidic residues. Residues 167–223 (EKAKALREKQLQERRRRLEEQRLKAEQRRAALEERQRQKLEKNKERYEAAIQRSVKK) adopt a coiled-coil conformation. 5 positions are modified to phosphoserine: serine 256, serine 275, serine 315, serine 368, and serine 401. The interval 318 to 815 (TLPRNGRDQG…GFPAKGTAGD (498 aa)) is disordered. The segment covering 407-437 (RRLEATPVQKKEKKDKERENEKEKSALARER) has biased composition (basic and acidic residues). A phosphoserine mark is found at serine 444, serine 448, serine 454, and serine 460. Over residues 457-474 (AELSTKSKARPTSPSTTW) the composition is skewed to polar residues. Residue lysine 462 forms a Glycyl lysine isopeptide (Lys-Gly) (interchain with G-Cter in SUMO2) linkage. Residues serine 479 and serine 496 each carry the phosphoserine modification. Residues 479-497 (SPCPSPGPGHTLPPKPPSP) are compositionally biased toward pro residues. Basic and acidic residues predominate over residues 523–539 (PEDKNHSKSRTAEEKEP). The segment covering 542 to 556 (PASPAPSPVPSPTPA) has biased composition (pro residues). 3 positions are modified to phosphoserine: serine 544, serine 548, and serine 552. Position 554 is a phosphothreonine (threonine 554). Residues 568 to 582 (PPDTAVPAVPTVPTF) are compositionally biased toward low complexity. Residues 602–724 (TTDREEATRL…QERRKRLEEI (123 aa)) are a coiled coil. Residues 603–743 (TDREEATRLL…AETKKQDGKE (141 aa)) show a composition bias toward basic and acidic residues.

The protein belongs to the MAP7 family.

It is found in the cytoplasm. The protein resides in the cytoskeleton. Its subcellular location is the spindle. The protein localises to the microtubule organizing center. It localises to the centrosome. It is found in the midbody. Microtubule-stabilizing protein involved in the control of cell motility and neurite outgrowth. Facilitate microtubule stabilization through the maintenance of acetylated stable microtubules. This chain is MAP7 domain-containing protein 1 (Map7d1), found in Rattus norvegicus (Rat).